Reading from the N-terminus, the 196-residue chain is GTP cyclohydrolase 1 (196 aa).

Positions 86, 89, and 158 each coordinate Zn(2+).

Belongs to the GTP cyclohydrolase I family. In terms of assembly, toroid-shaped homodecamer, composed of two pentamers of five dimers.

It catalyses the reaction GTP + H2O = 7,8-dihydroneopterin 3'-triphosphate + formate + H(+). The protein operates within cofactor biosynthesis; 7,8-dihydroneopterin triphosphate biosynthesis; 7,8-dihydroneopterin triphosphate from GTP: step 1/1. The chain is GTP cyclohydrolase 1 from Clostridium botulinum (strain Langeland / NCTC 10281 / Type F).